A 195-amino-acid polypeptide reads, in one-letter code: Pyridoxal 5'-phosphate synthase subunit PdxT (195 aa).

46–48 is an L-glutamine binding site; it reads GES. The Nucleophile role is filled by Cys-78. L-glutamine is bound by residues Arg-106 and 134-135; that span reads IR. Catalysis depends on charge relay system residues His-170 and Glu-172.

This sequence belongs to the glutaminase PdxT/SNO family. In the presence of PdxS, forms a dodecamer of heterodimers. Only shows activity in the heterodimer.

It carries out the reaction aldehydo-D-ribose 5-phosphate + D-glyceraldehyde 3-phosphate + L-glutamine = pyridoxal 5'-phosphate + L-glutamate + phosphate + 3 H2O + H(+). The catalysed reaction is L-glutamine + H2O = L-glutamate + NH4(+). It participates in cofactor biosynthesis; pyridoxal 5'-phosphate biosynthesis. Functionally, catalyzes the hydrolysis of glutamine to glutamate and ammonia as part of the biosynthesis of pyridoxal 5'-phosphate. The resulting ammonia molecule is channeled to the active site of PdxS. In Pseudothermotoga lettingae (strain ATCC BAA-301 / DSM 14385 / NBRC 107922 / TMO) (Thermotoga lettingae), this protein is Pyridoxal 5'-phosphate synthase subunit PdxT.